Consider the following 86-residue polypeptide: DNA-directed RNA polymerase subunit omega (86 aa).

The protein belongs to the RNA polymerase subunit omega family. In terms of assembly, the RNAP catalytic core consists of 2 alpha, 1 beta, 1 beta' and 1 omega subunit. When a sigma factor is associated with the core the holoenzyme is formed, which can initiate transcription.

It carries out the reaction RNA(n) + a ribonucleoside 5'-triphosphate = RNA(n+1) + diphosphate. Its function is as follows. Promotes RNA polymerase assembly. Latches the N- and C-terminal regions of the beta' subunit thereby facilitating its interaction with the beta and alpha subunits. In Psychrobacter sp. (strain PRwf-1), this protein is DNA-directed RNA polymerase subunit omega.